We begin with the raw amino-acid sequence, 428 residues long: Serine--tRNA ligase (428 aa).

An L-serine-binding site is contributed by 231–233 (TAE). 262–264 (RSE) serves as a coordination point for ATP. An L-serine-binding site is contributed by Glu-285. ATP is bound at residue 349–352 (EISS). Ser-385 is a binding site for L-serine.

It belongs to the class-II aminoacyl-tRNA synthetase family. Type-1 seryl-tRNA synthetase subfamily. Homodimer. The tRNA molecule binds across the dimer.

It localises to the cytoplasm. It carries out the reaction tRNA(Ser) + L-serine + ATP = L-seryl-tRNA(Ser) + AMP + diphosphate + H(+). The catalysed reaction is tRNA(Sec) + L-serine + ATP = L-seryl-tRNA(Sec) + AMP + diphosphate + H(+). Its pathway is aminoacyl-tRNA biosynthesis; selenocysteinyl-tRNA(Sec) biosynthesis; L-seryl-tRNA(Sec) from L-serine and tRNA(Sec): step 1/1. In terms of biological role, catalyzes the attachment of serine to tRNA(Ser). Is also able to aminoacylate tRNA(Sec) with serine, to form the misacylated tRNA L-seryl-tRNA(Sec), which will be further converted into selenocysteinyl-tRNA(Sec). This chain is Serine--tRNA ligase, found in Staphylococcus aureus (strain bovine RF122 / ET3-1).